The primary structure comprises 237 residues: 7-cyano-7-deazaguanine synthase (237 aa).

15–25 contributes to the ATP binding site; it reads LSGGMDSTVCA. 4 residues coordinate Zn(2+): C197, C205, C208, and C211.

It belongs to the QueC family. The cofactor is Zn(2+).

The enzyme catalyses 7-carboxy-7-deazaguanine + NH4(+) + ATP = 7-cyano-7-deazaguanine + ADP + phosphate + H2O + H(+). It participates in purine metabolism; 7-cyano-7-deazaguanine biosynthesis. Catalyzes the ATP-dependent conversion of 7-carboxy-7-deazaguanine (CDG) to 7-cyano-7-deazaguanine (preQ(0)). This Koribacter versatilis (strain Ellin345) protein is 7-cyano-7-deazaguanine synthase.